The primary structure comprises 322 residues: Lipoyl synthase (322 aa).

The tract at residues Met-1–Gln-24 is disordered. Residues Arg-14 to Gln-24 are compositionally biased toward basic and acidic residues. [4Fe-4S] cluster is bound by residues Cys-59, Cys-64, Cys-70, Cys-85, Cys-89, Cys-92, and Ser-298. Positions Trp-71–Leu-287 constitute a Radical SAM core domain.

This sequence belongs to the radical SAM superfamily. Lipoyl synthase family. Requires [4Fe-4S] cluster as cofactor.

The protein localises to the cytoplasm. It catalyses the reaction [[Fe-S] cluster scaffold protein carrying a second [4Fe-4S](2+) cluster] + N(6)-octanoyl-L-lysyl-[protein] + 2 oxidized [2Fe-2S]-[ferredoxin] + 2 S-adenosyl-L-methionine + 4 H(+) = [[Fe-S] cluster scaffold protein] + N(6)-[(R)-dihydrolipoyl]-L-lysyl-[protein] + 4 Fe(3+) + 2 hydrogen sulfide + 2 5'-deoxyadenosine + 2 L-methionine + 2 reduced [2Fe-2S]-[ferredoxin]. Its pathway is protein modification; protein lipoylation via endogenous pathway; protein N(6)-(lipoyl)lysine from octanoyl-[acyl-carrier-protein]: step 2/2. In terms of biological role, catalyzes the radical-mediated insertion of two sulfur atoms into the C-6 and C-8 positions of the octanoyl moiety bound to the lipoyl domains of lipoate-dependent enzymes, thereby converting the octanoylated domains into lipoylated derivatives. This is Lipoyl synthase from Chelativorans sp. (strain BNC1).